A 358-amino-acid chain; its full sequence is 3-dehydroquinate synthase (358 aa).

Residues 70–75 (DGEAHK), 104–108 (GVIGD), 128–129 (TT), K141, and K150 contribute to the NAD(+) site. Zn(2+) contacts are provided by E183, H246, and H263.

Belongs to the sugar phosphate cyclases superfamily. Dehydroquinate synthase family. NAD(+) serves as cofactor. Co(2+) is required as a cofactor. It depends on Zn(2+) as a cofactor.

It localises to the cytoplasm. It catalyses the reaction 7-phospho-2-dehydro-3-deoxy-D-arabino-heptonate = 3-dehydroquinate + phosphate. The protein operates within metabolic intermediate biosynthesis; chorismate biosynthesis; chorismate from D-erythrose 4-phosphate and phosphoenolpyruvate: step 2/7. Functionally, catalyzes the conversion of 3-deoxy-D-arabino-heptulosonate 7-phosphate (DAHP) to dehydroquinate (DHQ). The polypeptide is 3-dehydroquinate synthase (Bordetella bronchiseptica (strain ATCC BAA-588 / NCTC 13252 / RB50) (Alcaligenes bronchisepticus)).